The following is a 227-amino-acid chain: MPQLRWLGHAAVELLINKKRVLIDPMIKDNPLSPVKLDSFNNNVDLIVVTHDHYDHLGDAVELLKMNPKASLFATFDLEVYLSNEYKIDMSRFIPANVGGFIDFDGLKLALTKAVHSSEHSDPSGAIISGENITVYHAGDTGLFEDMKLIGEVFKPDYALLPIGGRFTMDPYQASLAVDMIKPKKYAIPIHFNTWDLIKVNPDDFVKEVSKRGYRALVLKPGQSVEL.

This sequence belongs to the UPF0173 family.

The sequence is that of UPF0173 metal-dependent hydrolase Saci_1512 from Sulfolobus acidocaldarius (strain ATCC 33909 / DSM 639 / JCM 8929 / NBRC 15157 / NCIMB 11770).